The following is a 483-amino-acid chain: Beta-glucosidase 4 (483 aa).

A beta-D-glucoside contacts are provided by residues Gln29, His131, 176 to 177, Tyr310, and Glu380; that span reads NE. Glu177 acts as the Proton donor in catalysis. The active-site Nucleophile is Glu380. Asn398 carries an N-linked (GlcNAc...) asparagine glycan. Residues Trp429, 436 to 437, and Phe445 contribute to the a beta-D-glucoside site; that span reads EW.

The protein belongs to the glycosyl hydrolase 1 family.

The enzyme catalyses Hydrolysis of terminal, non-reducing beta-D-glucosyl residues with release of beta-D-glucose.. In Oryza sativa subsp. japonica (Rice), this protein is Beta-glucosidase 4 (BGLU4).